The sequence spans 75 residues: Gas vesicle protein S (75 aa).

Belongs to the gas vesicle GvpA family.

It is found in the gas vesicle. In terms of biological role, probably a minor component of the gas vesicle. Gas vesicles are hollow, gas filled proteinaceous nanostructures found in some microorganisms. It is not clear what function gas vesicles perform in soil bacteria. The protein is Gas vesicle protein S of Streptomyces sp. (strain CB03234).